We begin with the raw amino-acid sequence, 126 residues long: MKWTFILAVAAGGSLGSVARYLVGIGFGRLLGPKFPWGTLFINITGSLLIGLFAGLFAIRWNLPQAVRIFLIVGICGGYTTFSTFSLDSFYLIERGEVAAAGAYMIASVVLSVGALIAGIQIVRVL.

Transmembrane regions (helical) follow at residues 5-25 (FILA…LVGI), 39-59 (TLFI…LFAI), 69-89 (IFLI…SLDS), and 100-120 (AAGA…IAGI). The Na(+) site is built by G77 and T80.

The protein belongs to the fluoride channel Fluc/FEX (TC 1.A.43) family.

It is found in the cell inner membrane. The enzyme catalyses fluoride(in) = fluoride(out). Na(+) is not transported, but it plays an essential structural role and its presence is essential for fluoride channel function. In terms of biological role, fluoride-specific ion channel. Important for reducing fluoride concentration in the cell, thus reducing its toxicity. This is Fluoride-specific ion channel FluC 1 from Nitrobacter hamburgensis (strain DSM 10229 / NCIMB 13809 / X14).